A 616-amino-acid chain; its full sequence is Dihydroxy-acid dehydratase (616 aa).

A Mg(2+)-binding site is contributed by Asp81. Cys122 contributes to the [2Fe-2S] cluster binding site. Mg(2+) contacts are provided by Asp123 and Lys124. Residue Lys124 is modified to N6-carboxylysine. Cys195 is a [2Fe-2S] cluster binding site. Glu491 lines the Mg(2+) pocket. The active-site Proton acceptor is Ser517.

Belongs to the IlvD/Edd family. In terms of assembly, homodimer. Requires [2Fe-2S] cluster as cofactor. The cofactor is Mg(2+).

It catalyses the reaction (2R)-2,3-dihydroxy-3-methylbutanoate = 3-methyl-2-oxobutanoate + H2O. The catalysed reaction is (2R,3R)-2,3-dihydroxy-3-methylpentanoate = (S)-3-methyl-2-oxopentanoate + H2O. The protein operates within amino-acid biosynthesis; L-isoleucine biosynthesis; L-isoleucine from 2-oxobutanoate: step 3/4. Its pathway is amino-acid biosynthesis; L-valine biosynthesis; L-valine from pyruvate: step 3/4. Its function is as follows. Functions in the biosynthesis of branched-chain amino acids. Catalyzes the dehydration of (2R,3R)-2,3-dihydroxy-3-methylpentanoate (2,3-dihydroxy-3-methylvalerate) into 2-oxo-3-methylpentanoate (2-oxo-3-methylvalerate) and of (2R)-2,3-dihydroxy-3-methylbutanoate (2,3-dihydroxyisovalerate) into 2-oxo-3-methylbutanoate (2-oxoisovalerate), the penultimate precursor to L-isoleucine and L-valine, respectively. The chain is Dihydroxy-acid dehydratase from Pectobacterium atrosepticum (strain SCRI 1043 / ATCC BAA-672) (Erwinia carotovora subsp. atroseptica).